A 315-amino-acid polypeptide reads, in one-letter code: Protein OPG185 (315 aa).

The first 16 residues, 1 to 16 (MTRLPILLLLISLVYA), serve as a signal peptide directing secretion. The 105-residue stretch at 17 to 121 (TPFPQTSKKI…NDTDKVDYEE (105 aa)) folds into the Ig-like V-type domain. Over 17-279 (TPFPQTSKKI…SNYKTKDFVE (263 aa)) the chain is Virion surface. Cys-34 and Cys-103 are oxidised to a cystine. N-linked (GlcNAc...) asparagine; by host glycosylation is found at Asn-37, Asn-69, Asn-112, and Asn-161. The tract at residues 194–213 (TVSATSGESTTDETPEPITD) is disordered. N-linked (GlcNAc...) asparagine; by host glycosylation is present at Asn-254. A helical membrane pass occupies residues 280–303 (IFGITALIILSAVAIFCITYYICN). At 304–315 (KRSRKYKTENKV) the chain is on the intravirion side.

The protein belongs to the orthopoxvirus OPG185 family. As to quaternary structure, heterodimerizes with OPG040. The heterodimer OPG185-OPG040 interacts with components of the entry fusion complex OPG143 and OPG094. Heterodimer with C3/VPC protein; disulfide-linked. In terms of processing, glycosylated; contains phosphate and sulfate-substituted glycans. O-glycosylation is required for hemagglutination and hemadsorption activities of infected cell membranes.

It localises to the virion membrane. The protein resides in the host membrane. Functionally, prevents cell to cell fusion by interacting with and directing the viral OPG040 protein on the host plasma membrane. The OPG185-OPG040 complex associates with components of the entry fusion complex (EFC) presumably to avoid superinfection and syncytium formation. Via its interaction with C3/VCP protein, protects the infected cell and probably also the extracellular enveloped virus from complement attack. In Vaccinia virus (strain Copenhagen) (VACV), this protein is Protein OPG185 (OPG185).